The following is a 105-amino-acid chain: uncharacterized protein (105 aa).

This is an uncharacterized protein from Microplitis demolitor (Parasitoid wasp).